The sequence spans 196 residues: Cilia- and flagella-associated protein 107 (196 aa).

Mn stretches follow at residues 46–61 (TPQT…FPGH) and 96–108 (ISTY…RHNY). Positions 168-196 (YPRPPAGAMSRREHAIPVPPPRLQPVPHF) are disordered. Over residues 184–196 (PVPPPRLQPVPHF) the composition is skewed to pro residues.

As to quaternary structure, microtubule inner protein component of sperm flagellar doublet microtubules. As to expression, expressed in trachea multiciliated cells.

It localises to the cytoplasm. It is found in the cytoskeleton. The protein resides in the cilium axoneme. The protein localises to the flagellum axoneme. Microtubule inner protein (MIP) part of the dynein-decorated doublet microtubules (DMTs) in cilia axoneme, which is required for motile cilia beating. The polypeptide is Cilia- and flagella-associated protein 107 (Bos taurus (Bovine)).